Reading from the N-terminus, the 102-residue chain is Cytochrome c3 (102 aa).

Heme c is bound by residues His-26, His-29, Cys-34, Cys-37, His-38, His-39, Cys-50, Cys-55, His-56, His-73, Cys-81, Cys-84, His-85, Cys-95, Cys-98, and His-99.

It depends on heme as a cofactor.

Its subcellular location is the periplasm. Its function is as follows. Participates in sulfate respiration coupled with phosphorylation by transferring electrons from the enzyme dehydrogenase to ferredoxin. This chain is Cytochrome c3, found in Desulfovibrio desulfuricans.